Here is a 374-residue protein sequence, read N- to C-terminus: Glutamate 5-kinase (374 aa).

K16 contacts ATP. Substrate-binding residues include S56, D143, and N155. An ATP-binding site is contributed by 175–176 (TD). The region spanning 282–360 (KGCFVVDEGA…TRIEEILGYV (79 aa)) is the PUA domain.

The protein belongs to the glutamate 5-kinase family.

The protein resides in the cytoplasm. The catalysed reaction is L-glutamate + ATP = L-glutamyl 5-phosphate + ADP. The protein operates within amino-acid biosynthesis; L-proline biosynthesis; L-glutamate 5-semialdehyde from L-glutamate: step 1/2. Functionally, catalyzes the transfer of a phosphate group to glutamate to form L-glutamate 5-phosphate. The polypeptide is Glutamate 5-kinase (Methylococcus capsulatus (strain ATCC 33009 / NCIMB 11132 / Bath)).